The sequence spans 290 residues: MGLVHALLPFAAAAALLLLAAPPPATADDPGLAVYWGRHKEEGSLREACDTGRYTTVIITFYNAFGHGRYSLDISGHPLAAVGADIKHCQSRGITVLLSIGGQGGAYSLPTNASAADVADNLWNAYLGGHRAGVARPFGDDAAVDGIDFFIDQGGADHYDDLARRLDGYNKYYRGRVGVLLTATTRCSYPDHRLEKALATGVFARIHVRMFGDEQCTMSPRYSWEKWAAAFPGSKVYIGLVASPEQDSAWMFQKDLYYEMLQFVRSLPNYGGLAIYDRYFDKKANYTGEG.

Positions 1-27 (MGLVHALLPFAAAAALLLLAAPPPATA) are cleaved as a signal peptide. The GH18 domain maps to 30–290 (PGLAVYWGRH…DKKANYTGEG (261 aa)). A disulfide bond links C49 and C89. N112 is a glycosylation site (N-linked (GlcNAc...) asparagine). A disulfide bridge connects residues C187 and C216. N285 carries N-linked (GlcNAc...) asparagine glycosylation.

The protein belongs to the glycosyl hydrolase 18 family. Xylanase inhibitor subfamily. Binds to fungal GH10 xylanases.

The protein resides in the secreted. Functionally, fungal xylanase inhibitor. Possesses competitive inhibiting activity against several fungal endo-1,4-beta-D-xylanases belonging to glycoside hydrolase family 10 (GH10) and family 11 (GH11). May function in plant defense against secreted fungal pathogen xylanases. Is similar to class III chitinases, but does not exhibit chitinase activity. This chain is Xylanase inhibitor protein 2, found in Oryza sativa subsp. japonica (Rice).